The primary structure comprises 94 residues: Small ribosomal subunit protein uS17 (94 aa).

The protein belongs to the universal ribosomal protein uS17 family. As to quaternary structure, part of the 30S ribosomal subunit.

Functionally, one of the primary rRNA binding proteins, it binds specifically to the 5'-end of 16S ribosomal RNA. In Streptomyces griseus subsp. griseus (strain JCM 4626 / CBS 651.72 / NBRC 13350 / KCC S-0626 / ISP 5235), this protein is Small ribosomal subunit protein uS17.